Here is a 309-residue protein sequence, read N- to C-terminus: F-box/LRR-repeat protein At3g48880 (309 aa).

One can recognise an F-box domain in the interval 10-57; it reads LRRWEELDTDILVRIFQKFSVFELTSGLAHVCRGWRAACCDPILWKTV. LRR repeat units lie at residues 77 to 107, 108 to 133, 159 to 184, and 208 to 233; these read VERR…IFHF, NLFL…VLPA, SIAN…KIMG, and CSAI…NISH.

This is F-box/LRR-repeat protein At3g48880 from Arabidopsis thaliana (Mouse-ear cress).